The sequence spans 523 residues: MTNIHNHKILILDFGSQYTQLIARRVREIGVYCELWAWDVTEEQIREFNPTGIILSGGPESTTEENSPRAPEYVFNAGVPVLGICYGMQTMAMQLGGLTETSDHREFGYASVDLQATDALFAKLNDNLTASEPKLDVWMSHGDKVTRLPQGFQVTGITPTCPIAAMSDESRRFYGVQFHPEVTHTKSGLELLTNFVVGICGCECKWTAENIIEDAVARIKEQVGDDEVILGLSGGVDSSVTALLLHRAIGKNLHCVFVDNGLLRLNEGDQVMEMFGDKFGLNIIRVNAEDRFLDALKGIDEPEAKRKTIGKVFVDVFDDESKKLTSVKWLAQGTIYPDVIESAASKTGKAHVIKSHHNVGGLPDYMKLGLVEPLRELFKDEVRKIGLALGLPAEMLNRHPFPGPGLGVRVLGEIKKEYCDLLRKADAIFIEELYKADWYYKVSQAFTVFLPVKSVGVMGDGRKYDWVVSLRAVETIDFMTAHWAHLPYDLLGKISNRIINEVNGISRVVYDVSGKPPATIEWE.

The Glutamine amidotransferase type-1 domain maps to 8-205 (KILILDFGSQ…VVGICGCECK (198 aa)). Cysteine 85 acts as the Nucleophile in catalysis. Active-site residues include histidine 179 and glutamate 181. Residues 206–398 (WTAENIIEDA…LGLPAEMLNR (193 aa)) enclose the GMPS ATP-PPase domain. 233-239 (SGGVDSS) provides a ligand contact to ATP.

In terms of assembly, homodimer.

The catalysed reaction is XMP + L-glutamine + ATP + H2O = GMP + L-glutamate + AMP + diphosphate + 2 H(+). Its pathway is purine metabolism; GMP biosynthesis; GMP from XMP (L-Gln route): step 1/1. Functionally, catalyzes the synthesis of GMP from XMP. The sequence is that of GMP synthase [glutamine-hydrolyzing] from Actinobacillus pleuropneumoniae serotype 3 (strain JL03).